We begin with the raw amino-acid sequence, 300 residues long: uncharacterized protein (300 aa).

Positions 67–179 form a coiled coil; that stretch reads LAFEELEKEK…IAKANELKDS (113 aa). Over residues 203-285 the composition is skewed to low complexity; that stretch reads STTASLSQSE…PSSQSTYQQQ (83 aa). Positions 203-300 are disordered; it reads STTASLSQSE…KGFFARLFNL (98 aa).

This is an uncharacterized protein from Staphylococcus epidermidis (strain ATCC 12228 / FDA PCI 1200).